Reading from the N-terminus, the 796-residue chain is U-box domain-containing protein 51 (796 aa).

3 disordered regions span residues aspartate 163–glutamine 195, threonine 218–valine 240, and arginine 270–glutamine 292. Residues alanine 171 to serine 181 are compositionally biased toward basic and acidic residues. The segment covering aspartate 182–glutamine 195 has biased composition (low complexity). Residues arginine 270–serine 291 show a composition bias toward low complexity. The stretch at glutamate 298–glycine 407 forms a coiled coil. A Protein kinase domain is found at phenylalanine 429–leucine 700. Residues isoleucine 435–valine 443 and lysine 456 contribute to the ATP site. Aspartate 557 functions as the Proton acceptor in the catalytic mechanism. The 73-residue stretch at asparagine 724–lysine 796 folds into the U-box domain.

This sequence belongs to the protein kinase superfamily. Ser/Thr protein kinase family.

The catalysed reaction is L-seryl-[protein] + ATP = O-phospho-L-seryl-[protein] + ADP + H(+). It carries out the reaction L-threonyl-[protein] + ATP = O-phospho-L-threonyl-[protein] + ADP + H(+). The enzyme catalyses S-ubiquitinyl-[E2 ubiquitin-conjugating enzyme]-L-cysteine + [acceptor protein]-L-lysine = [E2 ubiquitin-conjugating enzyme]-L-cysteine + N(6)-ubiquitinyl-[acceptor protein]-L-lysine.. Its pathway is protein modification; protein ubiquitination. In terms of biological role, functions as an E3 ubiquitin ligase. The chain is U-box domain-containing protein 51 (PUB51) from Arabidopsis thaliana (Mouse-ear cress).